An 869-amino-acid polypeptide reads, in one-letter code: NACHT, LRR and PYD domains-containing protein 6 (869 aa).

Positions 37–128 (KLRDAPLDGR…REHVLRQHAK (92 aa)) constitute a Pyrin domain. Residues 194–511 (LTVVLQGPAG…EFLAALSYLL (318 aa)) form the NACHT domain. 200–207 (GPAGIGKT) provides a ligand contact to ATP. Residues 350 to 354 (KDKKK) form a disordered region. Residues 460-485 (EEDLEKLKLRGSQVQTIFLNKKEIPG) form an LRR 1 repeat. Residues 577 to 608 (VQGQSHPKGPPVGAKKTAELEDIEDAEEEEEE) form a disordered region. Residues 596–608 (LEDIEDAEEEEEE) show a composition bias toward acidic residues. LRR repeat units follow at residues 635–658 (LSSL…VLNY) and 837–860 (TLSL…KTSK).

It belongs to the NLRP family. As to quaternary structure, homomultimer; forms the NLRP6 inflammasome polymeric complex, a filament composed of homopolymers in response to pathogens and other damage-associated signals. The core of NLRP6 inflammasomes consists of a signal sensor component (NLRP6), an adapter (PYCARD/ASC), which recruits effector pro-inflammatory caspases (CASP1 and CASP4). Interacts (via pyrin domain) with PYCARD/ASC (via pyrin domain); interaction takes place following NLRP6 activation and formation of liquid-liquid phase separation (LLPS), initiating nucleation which greatly enhances further addition of soluble PYCARD/ASC molecules to the speck in a prion-like polymerization process. Clustered PYCARD/ASC nucleates the formation of CASP1 (or possibly CASP4) filaments through the interaction of their respective CARD domains, acting as a platform for CASP1 polymerization. CASP1 filament formation increases local enzyme concentration, resulting in trans-autocleavage and activation. Active CASP1 then processes IL1B and IL18 precursors, leading to the release of mature cytokines in the extracellular milieu and inflammatory response. Interacts with DHX15. Polyubiquitinated with 'Lys-63'-linked chains, promoting the interaction with PYCARD/ASC and formation of the NLRP6 inflammasome. Deubiquitination by CYLD decreases the interaction with PYCARD/ASC. Highly expressed in the gastrointestinal tract, predominantly in colonic myofibroblasts and in colonic epithelial and endothelial cells. Within the intestinal mucosa, highly expressed by goblet cells. Also expressed in hepatocytes and in immune cells, including CD4(+) and CD8(+) T-cells, dendritic cells, mastocytes and peritoneal macrophages, as well as in lung, kidney, bladder and gonads.

The protein localises to the cytoplasm. It is found in the inflammasome. Its subcellular location is the cell membrane. It localises to the nucleus membrane. In terms of biological role, acts as the sensor component of the NLRP6 inflammasome, which mediates inflammasome activation in response to various pathogen-associated signals, leading to maturation and secretion of IL1B and IL18. Inflammasomes are supramolecular complexes that assemble in the cytosol in response to pathogens and other damage-associated signals and play critical roles in innate immunity and inflammation. Acts as a recognition receptor (PRR): recognizes and binds specific pathogens and other damage-associated signals, such as lipoteichoic acid (LTA), a cell-wall component of Gram-positive bacteria, or double stranded RNA (dsRNA). May also recognize and bind lipopolysaccharide (LPS), a major component of the outer membrane of Gram-negative bacteria; however, LPS is probably not a major activator of the NLRP6 inflammasome. Following LTA- or dsRNA-binding, NLRP6 undergoes liquid-liquid phase separation (LLPS), enhancing multivalent interactions, an essential step for the formation of the NLRP6 inflammasome polymeric complex. The NLRP6 inflammasome acts by promoting recruitment of effector pro-inflammatory caspases (CASP1 and/or CASP4) that catalyze maturation and secretion of IL1B and IL18 in the extracellular milieu. The NLRP6 inflammasome plays a central role in the maintenance of epithelial integrity and host defense against microbial infections in the intestine. Required to restrict infection against Gram-positive bacteria by recognizing lipoteichoic acid (LTA), leading to recruitment of CASP4 and CASP1, and subsequent maturation and secretion of IL1B and IL18. Involved in intestinal antiviral innate immunity together with DHX15: recognizes and binds viral dsRNA to restrict infection by enteric viruses through the interferon pathway and GSDMD-dependent release of IL18. Required to prevent infection by the apicomplexan parasite C.tyzzeri in enterocytes by promoting GSDMD-dependent release of IL18. The NLRP6 inflammasome may also regulate the gut microbiota composition by acting as a sensor of microbiota-associated metabolites to form a PYCARD/ASC-dependent inflammasome for downstream IL18 release and secretion of antimicrobial peptides. Its role in the regulation of the gut microbiota composition is however subject to discussion. Essential for gut mucosal self-renewal and proliferation. Regulate mucus secretion in an inflammasome- and autophagy-dependent manner to prevent invasion by enteric bacteria. During systemic bacterial infections, the NLRP6 inflammasome negatively regulates neutrophil recruitment and neutrophil extracellular traps (NETs) formation. May promote peripheral nerve recovery following injury via an inflammasome-independent mechanism. This is NACHT, LRR and PYD domains-containing protein 6 from Mus musculus (Mouse).